Reading from the N-terminus, the 424-residue chain is Serine hydroxymethyltransferase (424 aa).

Residues Leu-118 and 122 to 124 (GHL) contribute to the (6S)-5,6,7,8-tetrahydrofolate site. The residue at position 227 (Lys-227) is an N6-(pyridoxal phosphate)lysine. 351-353 (SPF) contacts (6S)-5,6,7,8-tetrahydrofolate.

It belongs to the SHMT family. Homodimer. Pyridoxal 5'-phosphate is required as a cofactor.

It is found in the cytoplasm. The enzyme catalyses (6R)-5,10-methylene-5,6,7,8-tetrahydrofolate + glycine + H2O = (6S)-5,6,7,8-tetrahydrofolate + L-serine. The protein operates within one-carbon metabolism; tetrahydrofolate interconversion. It participates in amino-acid biosynthesis; glycine biosynthesis; glycine from L-serine: step 1/1. In terms of biological role, catalyzes the reversible interconversion of serine and glycine with tetrahydrofolate (THF) serving as the one-carbon carrier. This reaction serves as the major source of one-carbon groups required for the biosynthesis of purines, thymidylate, methionine, and other important biomolecules. Also exhibits THF-independent aldolase activity toward beta-hydroxyamino acids, producing glycine and aldehydes, via a retro-aldol mechanism. The protein is Serine hydroxymethyltransferase of Thermosipho melanesiensis (strain DSM 12029 / CIP 104789 / BI429).